The chain runs to 186 residues: Lipid A acyltransferase PagP (186 aa).

A signal peptide spans 1 to 25 (MNVSKYVAIFSFVFIQLISVGKVFA). Catalysis depends on residues H58, D101, and S102.

This sequence belongs to the lipid A palmitoyltransferase family. In terms of assembly, homodimer.

The protein resides in the cell outer membrane. The enzyme catalyses a lipid A + a 1,2-diacyl-sn-glycero-3-phosphocholine = a hepta-acyl lipid A + a 2-acyl-sn-glycero-3-phosphocholine. It catalyses the reaction a lipid IVA + a 1,2-diacyl-sn-glycero-3-phosphocholine = a lipid IVB + a 2-acyl-sn-glycero-3-phosphocholine. It carries out the reaction a lipid IIA + a 1,2-diacyl-sn-glycero-3-phosphocholine = a lipid IIB + a 2-acyl-sn-glycero-3-phosphocholine. Its function is as follows. Transfers a fatty acid residue from the sn-1 position of a phospholipid to the N-linked hydroxyfatty acid chain on the proximal unit of lipid A or its precursors. The sequence is that of Lipid A acyltransferase PagP from Shigella flexneri serotype X (strain 2002017).